A 504-amino-acid chain; its full sequence is AMP phosphorylase (504 aa).

Residues glycine 169, 195-200 (SRAITS), and threonine 204 contribute to the AMP site. Aspartate 257 serves as the catalytic Proton donor. AMP-binding residues include serine 265 and lysine 289.

This sequence belongs to the thymidine/pyrimidine-nucleoside phosphorylase family. Type 2 subfamily.

It catalyses the reaction AMP + phosphate = alpha-D-ribose 1,5-bisphosphate + adenine. The catalysed reaction is CMP + phosphate = cytosine + alpha-D-ribose 1,5-bisphosphate. It carries out the reaction UMP + phosphate = alpha-D-ribose 1,5-bisphosphate + uracil. Its function is as follows. Catalyzes the conversion of AMP and phosphate to adenine and ribose 1,5-bisphosphate (R15P). Exhibits phosphorylase activity toward CMP and UMP in addition to AMP. Functions in an archaeal AMP degradation pathway, together with R15P isomerase and RubisCO. This chain is AMP phosphorylase, found in Methanococcus aeolicus (strain ATCC BAA-1280 / DSM 17508 / OCM 812 / Nankai-3).